The primary structure comprises 323 residues: o-succinylbenzoate synthase (323 aa).

The active-site Proton donor is K134. Mg(2+) contacts are provided by D162, E191, and D214. The active-site Proton acceptor is K236.

It belongs to the mandelate racemase/muconate lactonizing enzyme family. MenC type 1 subfamily. A divalent metal cation serves as cofactor.

The catalysed reaction is (1R,6R)-6-hydroxy-2-succinyl-cyclohexa-2,4-diene-1-carboxylate = 2-succinylbenzoate + H2O. It participates in quinol/quinone metabolism; 1,4-dihydroxy-2-naphthoate biosynthesis; 1,4-dihydroxy-2-naphthoate from chorismate: step 4/7. The protein operates within quinol/quinone metabolism; menaquinone biosynthesis. In terms of biological role, converts 2-succinyl-6-hydroxy-2,4-cyclohexadiene-1-carboxylate (SHCHC) to 2-succinylbenzoate (OSB). This is o-succinylbenzoate synthase from Yersinia pseudotuberculosis serotype O:1b (strain IP 31758).